We begin with the raw amino-acid sequence, 622 residues long: Probable potassium transport system protein Kup (622 aa).

Helical transmembrane passes span 9 to 29, 52 to 72, 101 to 121, 137 to 157, 169 to 189, 213 to 233, 247 to 267, 287 to 309, 337 to 357, 363 to 383, 396 to 416, and 419 to 439; these read LPAV…TSPL, FLSL…LAFV, VLLV…VITP, PALT…LFVI, FGPV…ISIF, VAFF…ALYA, WFTV…ALIL, FPMV…SGVF, IYIP…VVTF, LAAA…ILAC, VVKI…LANV, and FFAG…VMAT.

The protein belongs to the HAK/KUP transporter (TC 2.A.72) family.

Its subcellular location is the cell inner membrane. It carries out the reaction K(+)(in) + H(+)(in) = K(+)(out) + H(+)(out). Transport of potassium into the cell. Likely operates as a K(+):H(+) symporter. This is Probable potassium transport system protein Kup from Tolumonas auensis (strain DSM 9187 / NBRC 110442 / TA 4).